The chain runs to 244 residues: Ureidoacrylate amidohydrolase RutB (244 aa).

D38 serves as the catalytic Proton acceptor. The active site involves K147. The Nucleophile role is filled by C180.

It belongs to the isochorismatase family. RutB subfamily.

It carries out the reaction (Z)-3-ureidoacrylate + H2O + H(+) = (Z)-3-aminoacrylate + NH4(+) + CO2. It catalyses the reaction (Z)-3-ureidoacrylate + H2O = (Z)-3-aminoacrylate + carbamate + H(+). The catalysed reaction is (Z)-2-methylureidoacrylate + H2O + H(+) = (Z)-2-methylaminoacrylate + NH4(+) + CO2. Functionally, hydrolyzes ureidoacrylate to form aminoacrylate and carbamate. The carbamate hydrolyzes spontaneously, thereby releasing one of the nitrogen atoms of the pyrimidine ring as ammonia and one of its carbon atoms as CO2. This is Ureidoacrylate amidohydrolase RutB from Escherichia coli O6:H1 (strain CFT073 / ATCC 700928 / UPEC).